A 154-amino-acid polypeptide reads, in one-letter code: General odorant-binding protein 83a (154 aa).

An N-terminal signal peptide occupies residues 1–33 (MALNGFGRRVSASVLLIALSLLSGALILPPAAA). 3 disulfide bridges follow: cysteine 55-cysteine 86, cysteine 82-cysteine 133, and cysteine 124-cysteine 142.

This sequence belongs to the PBP/GOBP family. As to expression, in the ventrolateral region of the antenna, expressed in two distinct types of olfactory hairs: in most sensilla trichodea and in a subset of the small sensilla basiconica (at protein level).

The protein resides in the secreted. This chain is General odorant-binding protein 83a (Obp83a), found in Drosophila melanogaster (Fruit fly).